The sequence spans 379 residues: Epoxyqueuosine reductase (379 aa).

Catalysis depends on Asp-140, which acts as the Proton donor. A 4Fe-4S ferredoxin-type domain is found at 184–214 (FEPDTPASDLCGSCNQCVKACPTGSLLGEGK). Positions 194, 197, 200, 204, 220, 246, 249, and 253 each coordinate [4Fe-4S] cluster. One copy of the HEAT-like PBS-type repeat lies at 307–332 (QRNAIIILARYKDKTAVPDLIDCLQN).

The protein belongs to the QueG family. As to quaternary structure, monomer. Requires cob(II)alamin as cofactor. The cofactor is [4Fe-4S] cluster.

It localises to the cytoplasm. It carries out the reaction epoxyqueuosine(34) in tRNA + AH2 = queuosine(34) in tRNA + A + H2O. It functions in the pathway tRNA modification; tRNA-queuosine biosynthesis. Its function is as follows. Catalyzes the conversion of epoxyqueuosine (oQ) to queuosine (Q), which is a hypermodified base found in the wobble positions of tRNA(Asp), tRNA(Asn), tRNA(His) and tRNA(Tyr). In Listeria monocytogenes serovar 1/2a (strain ATCC BAA-679 / EGD-e), this protein is Epoxyqueuosine reductase.